We begin with the raw amino-acid sequence, 339 residues long: Ketol-acid reductoisomerase (NADP(+)) (339 aa).

The region spanning 1 to 182 (MRVYYDRDAD…GGGRAGIIET (182 aa)) is the KARI N-terminal Rossmann domain. NADP(+) contacts are provided by residues 24 to 27 (YGSQ), R48, S51, and 83 to 86 (DEGQ). H108 is a catalytic residue. G134 is a binding site for NADP(+). A KARI C-terminal knotted domain is found at 183 to 328 (TFKEEVETDL…EKLRAMMPWI (146 aa)). Residues D191, E195, E227, and E231 each coordinate Mg(2+). S252 is a substrate binding site.

It belongs to the ketol-acid reductoisomerase family. Requires Mg(2+) as cofactor.

It carries out the reaction (2R)-2,3-dihydroxy-3-methylbutanoate + NADP(+) = (2S)-2-acetolactate + NADPH + H(+). It catalyses the reaction (2R,3R)-2,3-dihydroxy-3-methylpentanoate + NADP(+) = (S)-2-ethyl-2-hydroxy-3-oxobutanoate + NADPH + H(+). It functions in the pathway amino-acid biosynthesis; L-isoleucine biosynthesis; L-isoleucine from 2-oxobutanoate: step 2/4. It participates in amino-acid biosynthesis; L-valine biosynthesis; L-valine from pyruvate: step 2/4. Its function is as follows. Involved in the biosynthesis of branched-chain amino acids (BCAA). Catalyzes an alkyl-migration followed by a ketol-acid reduction of (S)-2-acetolactate (S2AL) to yield (R)-2,3-dihydroxy-isovalerate. In the isomerase reaction, S2AL is rearranged via a Mg-dependent methyl migration to produce 3-hydroxy-3-methyl-2-ketobutyrate (HMKB). In the reductase reaction, this 2-ketoacid undergoes a metal-dependent reduction by NADPH to yield (R)-2,3-dihydroxy-isovalerate. The chain is Ketol-acid reductoisomerase (NADP(+)) from Gluconobacter oxydans (strain 621H) (Gluconobacter suboxydans).